The primary structure comprises 161 residues: Ragulator complex protein LAMTOR1 (161 aa).

A disordered region spans residues 1-43 (MGCCYSSENEDSDQDREERKLLLDPSSTPTKALNGAEPNYHSL). The N-myristoyl glycine moiety is linked to residue glycine 2. 2 S-palmitoyl cysteine lipidation sites follow: cysteine 3 and cysteine 4. Residue lysine 20 forms a Glycyl lysine isopeptide (Lys-Gly) (interchain with G-Cter in ubiquitin) linkage. Serine 27 bears the Phosphoserine mark. Threonine 28 is subject to Phosphothreonine. Lysine 31 participates in a covalent cross-link: Glycyl lysine isopeptide (Lys-Gly) (interchain with G-Cter in ubiquitin). A phosphoserine mark is found at serine 42 and serine 56. Lysine 60 participates in a covalent cross-link: Glycyl lysine isopeptide (Lys-Gly) (interchain with G-Cter in ubiquitin). Serine 98 bears the Phosphoserine mark. Residues lysine 103 and lysine 104 each participate in a glycyl lysine isopeptide (Lys-Gly) (interchain with G-Cter in ubiquitin) cross-link. The segment at 121–161 (SEPIPFSDLQQVSRIAAYAYSALSQIRVDAKEELVVQFGIP) is interaction with LAMTOR2 and LAMTOR3. Position 141 is a phosphoserine (serine 141).

The protein belongs to the LAMTOR1 family. Part of the Ragulator complex composed of LAMTOR1, LAMTOR2, LAMTOR3, LAMTOR4 and LAMTOR5. LAMTOR4 and LAMTOR5 form a heterodimer that interacts, through LAMTOR1, with a LAMTOR2, LAMTOR3 heterodimer. Interacts with LAMTOR2 and LAMTOR3; the interaction is direct. The Ragulator complex interacts with both the mTORC1 complex and heterodimers constituted of the Rag GTPases RagA/RRAGA, RagB/RRAGB, RagC/RRAGC and RagD/RRAGD; regulated by amino acid availability. The Ragulator complex interacts with SLC38A9; the probable amino acid sensor. Component of the lysosomal folliculin complex (LFC), composed of FLCN, FNIP1 (or FNIP2), RagA/RRAGA or RagB/RRAGB GDP-bound, RagC/RRAGC or RagD/RRAGD GTP-bound, and Ragulator. Associates with the lysosomal V-ATPase complex; interaction promotes the guanine nucleotide exchange factor (GEF) of the Ragulator complex. Interacts with MMP14. Interacts with CDKN1B; prevents the interaction of CDKN1B with RHOA leaving RHOA in a form accessible to activation by ARHGEF2. Interacts with PIP4P1. N-terminal myristoylation and palmitoylation mediates its recruitment to lysosome membranes, thereby promoting localization of the Ragulator complex to lysosomes. N-myristoylation by NMT1 is required for palmitoylation at Cys-3 and Cys-4. Post-translationally, ubiquitinated at Lys-60, Lys-103 and Lys-104 by UBE3A in neurons, promoting its degradation by the proteasome, thereby limiting mTORC1 signaling and activity-dependent synaptic remodeling. Ubiquitination at Lys-20 impairs the association with the lysosomal V-ATPase complex. Deubiquitination at Lys-20 by USP32 promotes the association with the lysosomal V-ATPase complex and subsequent activation of the mTORC1 complex.

The protein localises to the lysosome membrane. Its subcellular location is the late endosome membrane. Functionally, key component of the Ragulator complex, a multiprotein complex involved in amino acid sensing and activation of mTORC1, a signaling complex promoting cell growth in response to growth factors, energy levels, and amino acids. Activated by amino acids through a mechanism involving the lysosomal V-ATPase, the Ragulator plays a dual role for the small GTPases Rag (RagA/RRAGA, RagB/RRAGB, RagC/RRAGC and/or RagD/RRAGD): it (1) acts as a guanine nucleotide exchange factor (GEF), activating the small GTPases Rag and (2) mediates recruitment of Rag GTPases to the lysosome membrane. Activated Ragulator and Rag GTPases function as a scaffold recruiting mTORC1 to lysosomes where it is in turn activated. LAMTOR1 is directly responsible for anchoring the Ragulator complex to the lysosomal membrane. LAMTOR1 wraps around the other subunits of the Ragulator complex to hold them in place and interacts with the Rag GTPases, thereby playing a key role in the recruitment of the mTORC1 complex to lysosomes. Also involved in the control of embryonic stem cells differentiation via non-canonical RagC/RRAGC and RagD/RRAGD activation: together with FLCN, it is necessary to recruit and activate RagC/RRAGC and RagD/RRAGD at the lysosomes, and to induce exit of embryonic stem cells from pluripotency via non-canonical, mTOR-independent TFE3 inactivation. Also required for late endosomes/lysosomes biogenesis it may regulate both the recycling of receptors through endosomes and the MAPK signaling pathway through recruitment of some of its components to late endosomes. May be involved in cholesterol homeostasis regulating LDL uptake and cholesterol release from late endosomes/lysosomes. May also play a role in RHOA activation. The chain is Ragulator complex protein LAMTOR1 from Mus musculus (Mouse).